The following is a 99-amino-acid chain: Small integral membrane protein 14 (99 aa).

At 1-49 (MAEGGFDPCECVCSHEHAMRRLINLLRQSQSYCTDTECLRELPGPSSDS) the chain is on the lumenal side. The chain crosses the membrane as a helical span at residues 50–70 (GISITVILMAWMVIAMLLFLL). At 71-99 (RPPNLRGSSLPGKPSSPHSGQDPPAPPVD) the chain is on the cytoplasmic side. Residues 77-99 (GSSLPGKPSSPHSGQDPPAPPVD) are disordered.

Ubiquitously expressed.

The protein resides in the endoplasmic reticulum membrane. This Mus musculus (Mouse) protein is Small integral membrane protein 14 (Smim14).